The sequence spans 461 residues: Argininosuccinate lyase (461 aa).

This sequence belongs to the lyase 1 family. Argininosuccinate lyase subfamily.

Its subcellular location is the cytoplasm. The enzyme catalyses 2-(N(omega)-L-arginino)succinate = fumarate + L-arginine. The protein operates within amino-acid biosynthesis; L-arginine biosynthesis; L-arginine from L-ornithine and carbamoyl phosphate: step 3/3. The chain is Argininosuccinate lyase from Symbiobacterium thermophilum (strain DSM 24528 / JCM 14929 / IAM 14863 / T).